Here is a 423-residue protein sequence, read N- to C-terminus: N-acylneuraminate cytidylyltransferase B (423 aa).

Residues R30, N40, R88, S97, S99, and Q120 each contribute to the substrate site. The active site involves R178.

This sequence belongs to the CMP-NeuNAc synthase family. In terms of assembly, homotetramer.

It is found in the cytoplasm. The enzyme catalyses an N-acylneuraminate + CTP = a CMP-N-acyl-beta-neuraminate + diphosphate. Its pathway is amino-sugar metabolism; N-acetylneuraminate metabolism. In terms of biological role, catalyzes the activation of 2-keto-3-deoxy-D-glycero-D-galacto-nononic acid (KDN) to cytidine 5'-monophosphate 2-keto-3-deoxy-D-glycero-D-galacto-nononic acid (CMP-KDN), a substrate required for the addition of sialic acid. Also has weak activity towards N-acetylneuraminic acid (NeuNAc) and N-glycolylneuraminic acid (Neu5Gc). This Danio rerio (Zebrafish) protein is N-acylneuraminate cytidylyltransferase B.